The chain runs to 149 residues: Ribonuclease H (149 aa).

Positions 1-142 constitute an RNase H type-1 domain; sequence MSTITIHTDG…ADELAREGLA (142 aa). Mg(2+)-binding residues include Asp-9, Glu-47, Asp-70, and Asp-134. The tract at residues 124–149 is disordered; the sequence is HAGDPGNERADELAREGLAEARGRQP. Over residues 129–149 the composition is skewed to basic and acidic residues; it reads GNERADELAREGLAEARGRQP.

Belongs to the RNase H family. Monomer. Mg(2+) is required as a cofactor.

The protein localises to the cytoplasm. It catalyses the reaction Endonucleolytic cleavage to 5'-phosphomonoester.. In terms of biological role, endonuclease that specifically degrades the RNA of RNA-DNA hybrids. This Maricaulis maris (strain MCS10) (Caulobacter maris) protein is Ribonuclease H.